The primary structure comprises 166 residues: Putative pre-16S rRNA nuclease (166 aa).

Residues 1–24 (MPDTAAPTPDRPGPDDPGRGRRLG) form a disordered region.

The protein belongs to the YqgF nuclease family.

It localises to the cytoplasm. In terms of biological role, could be a nuclease involved in processing of the 5'-end of pre-16S rRNA. This Mycobacteroides abscessus (strain ATCC 19977 / DSM 44196 / CCUG 20993 / CIP 104536 / JCM 13569 / NCTC 13031 / TMC 1543 / L948) (Mycobacterium abscessus) protein is Putative pre-16S rRNA nuclease.